The chain runs to 580 residues: Keratin, type II cytoskeletal 5 (580 aa).

Residues 1–161 form a head region; it reads MSRQSSVSFR…DPTIQRVRTE (161 aa). 4 positions are modified to phosphoserine: S5, S8, S16, and S21. T24 carries the post-translational modification Phosphothreonine; by CDK1. Residues S26, S36, S47, S61, S68, S72, S75, and S79 each carry the phosphoserine modification. The residue at position 145 (T145) is a Phosphothreonine; by CDK1. T160 is subject to Phosphothreonine; by AURKB. The coil 1A stretch occupies residues 162–197; that stretch reads EREQIKTLNNKFASFIDKVRFLEQQNKVLDTKWALL. Residues 162–475 form the IF rod domain; sequence EREQIKTLNN…KLLEGEECRL (314 aa). Positions 198–216 are linker 1; that stretch reads QEQGTKTIKQNLDPLFEQY. The coil 1B stretch occupies residues 217–309; that stretch reads INNLRRQLDG…FFDAELSQMQ (93 aa). The interval 310 to 332 is linker 12; it reads THVSDTSVVLSMDNNRSLDLDSI. A coil 2 region spans residues 333–471; it reads IAEVKAQYED…ATYRKLLEGE (139 aa). Residues 472–580 form a tail region; it reads ECRLSGEGVG…TSSSRRSFKS (109 aa). R526 carries the post-translational modification Omega-N-methylarginine. The segment at 555 to 580 is disordered; it reads FGSGGGSGSSVKFVSTTSSSRRSFKS. The span at 563-580 shows a compositional bias: low complexity; the sequence is SSVKFVSTTSSSRRSFKS.

It belongs to the intermediate filament family. In terms of assembly, heterodimer of a type I and a type II keratin. Heterodimer with type I keratin KRT25 leading to the formation of keratin intermediate filament (KIF) network. Forms a heterodimer (via 2B domains) with KRT14 (via 2B domains). Interacts with PLEC isoform 1C, when in a heterodimer with KRT14. Interacts with TCHP. Interacts with EPPK1. Interacts with AMELX. Interacts with PKP1 (via N-terminus) and PKP2. Phosphorylated by CDK1, AURKB and Rho-kinase, phosphorylation is regulated by the cell cycle. Thr-24 phosphorylation, mediated by CDK1, peaks during prometaphase or metaphase cells with phosphorylated filamentous structures evident throughout the cytoplasm during early mitosis. CDK1 phosphorylates Thr-24 in mitotic cells at the site of injury. In terms of processing, O-glycosylated. As to expression, expressed in the corneal epithelium (at protein level). Expressed in the epidermis of the ear (at protein level). Expressed in the basal and spinous layers of the skin at birth (at protein level).

The protein localises to the cytoplasm. In terms of biological role, required for the formation of keratin intermediate filaments in the basal epidermis and maintenance of the skin barrier in response to mechanical stress. Regulates the recruitment of Langerhans cells to the epidermis, potentially by modulation of the abundance of macrophage chemotactic cytokines, macrophage inflammatory cytokines and CTNND1 localization in keratinocytes. This is Keratin, type II cytoskeletal 5 from Mus musculus (Mouse).